The chain runs to 359 residues: Tropomodulin-1 (359 aa).

The disordered stretch occupies residues 36-61 (ELDPDNALLPAGLRQKDQTTKAPTGP). Residues 39–138 (PDNALLPAGL…CDIAAILGMH (100 aa)) form a tropomyosin-binding region.

This sequence belongs to the tropomodulin family. As to quaternary structure, binds to the N-terminus of tropomyosin and to actin. Interacts with FLII.

The protein localises to the cytoplasm. The protein resides in the cytoskeleton. Blocks the elongation and depolymerization of the actin filaments at the pointed end. The Tmod/TM complex contributes to the formation of the short actin protofilament, which in turn defines the geometry of the membrane skeleton. This Rattus norvegicus (Rat) protein is Tropomodulin-1 (Tmod1).